The sequence spans 190 residues: COMM domain-containing protein 1 (190 aa).

Residue Ala2 is modified to N-acetylalanine. The interval 2 to 123 (AAGELEGGKP…RWNSGLRGLS (122 aa)) is sufficient for interaction with SLC12A2. Positions 101, 110, and 134 each coordinate Cu cation. One can recognise a COMM domain in the interval 118-186 (GLRGLSWRVD…EVEESISTLI (69 aa)). Residues 125-190 (RVDGKSQSRH…SISTLISQPN (66 aa)) form a required for binding to PtdIns(4,5)P2 region.

It belongs to the COMM domain-containing protein 1 family. As to quaternary structure, component of the commander complex consisting of the CCC subcomplex and the retriever subcomplex. Component of the CCC (COMMD/CCDC22/CCDC93) subcomplex consisting of COMMD1, COMMD2, COMMD3, COMMD4, COMMD5, COMMD6, COMMD7, COMMD8, COMMD9, COMMD10, CCDC22 and CCDC93; within the complex forms a heterodimer with COMMD6. Interacts with VPS35L; the interaction associates the CCC complex with the retriever complex. Identified in a complex with an E3 ubiquitin ligase complex composed of TCEB1/elongin C, CUL2, SOCS1 and RBX1; in the complex interacts directly with SOCS1 and CUL2. Identified in a complex with NF-kappa-B. Interacts directly with SLC12A2. Interacts directly with ATP7B (via the N-terminal region). Interacts with ATP7A. Interacts with FAM107A; this interaction stabilizes COMMD1 in the nucleus. Interacts with CCS, CDKN2A, RELA, REL, RELB, NFKB1/p105, NFKB2/p100, NFKBIB, SCNN1D, SCNN1B, CFTR, CLU, SGK1, AKT1, CUL1, CUL2, CUL3, CUL4A, CUL4B, CUL5, CUL7, HIF1A. Acetylated by EP300 ina stimuli-specific manner; protecting it from XIAP-mediated proteasomal degradation and required for interaction with RElA in response to stress. In terms of processing, ubiquitinated; undergoes both 'Lys-63'- and 'Lys-48'-linked polyubiquitination. Ubiquitinated by XIAP, leading to its proteasomal degradation. Ubiquitous. Highest expression in the liver, with lower expression in brain, lung, placenta, pancreas, small intestine, heart, skeletal muscle, kidney and placenta. Down-regulated in cancer tissues.

It is found in the nucleus. The protein resides in the cytoplasm. Its subcellular location is the endosome membrane. It localises to the cytoplasmic vesicle. The protein localises to the early endosome. It is found in the recycling endosome. In terms of biological role, scaffold protein in the commander complex that is essential for endosomal recycling of transmembrane cargos; the commander complex is composed of the CCC subcomplex and the retriever subcomplex. Can modulate activity of cullin-RING E3 ubiquitin ligase (CRL) complexes by displacing CAND1; in vitro promotes CRL E3 activity and dissociates CAND1 from CUL1 and CUL2. Promotes ubiquitination of NF-kappa-B subunit RELA and its subsequent proteasomal degradation. Down-regulates NF-kappa-B activity. Involved in the regulation of membrane expression and ubiquitination of SLC12A2. Modulates Na(+) transport in epithelial cells by regulation of apical cell surface expression of amiloride-sensitive sodium channel (ENaC) subunits and by promoting their ubiquitination presumably involving NEDD4L. Promotes the localization of SCNN1D to recycling endosomes. Promotes CFTR cell surface expression through regulation of its ubiquitination. Down-regulates SOD1 activity by interfering with its homodimerization. Plays a role in copper ion homeostasis. Involved in copper-dependent ATP7A trafficking between the trans-Golgi network and vesicles in the cell periphery; the function is proposed to depend on its association within the CCC complex and cooperation with the WASH complex on early endosomes. Can bind one copper ion per monomer. May function to facilitate biliary copper excretion within hepatocytes. Binds to phosphatidylinositol 4,5-bisphosphate (PtdIns(4,5)P2). Involved in the regulation of HIF1A-mediated transcription; competes with ARNT/Hif-1-beta for binding to HIF1A resulting in decreased DNA binding and impaired transcriptional activation by HIF-1. Negatively regulates neuroblastoma G1/S phase cell cycle progression and cell proliferation by stimulating ubiquitination of NF-kappa-B subunit RELA and NF-kappa-B degradation in a FAM107A- and actin-dependent manner. In Homo sapiens (Human), this protein is COMM domain-containing protein 1 (COMMD1).